The primary structure comprises 73 residues: MKKDLHPEYHVINVKMTNGDVVEMRSIWGAEGDTLALDIDPTVHPAWTGGGARLLDTGGRVSKFKKKYEGLGF.

The protein belongs to the bacterial ribosomal protein bL31 family. Type A subfamily. Part of the 50S ribosomal subunit.

Functionally, binds the 23S rRNA. The protein is Large ribosomal subunit protein bL31 (rpmE) of Jannaschia sp. (strain CCS1).